Reading from the N-terminus, the 583-residue chain is 2-succinyl-5-enolpyruvyl-6-hydroxy-3-cyclohexene-1-carboxylate synthase (583 aa).

Belongs to the TPP enzyme family. MenD subfamily. As to quaternary structure, homodimer. Requires Mg(2+) as cofactor. Mn(2+) serves as cofactor. Thiamine diphosphate is required as a cofactor.

It carries out the reaction isochorismate + 2-oxoglutarate + H(+) = 5-enolpyruvoyl-6-hydroxy-2-succinyl-cyclohex-3-ene-1-carboxylate + CO2. It functions in the pathway quinol/quinone metabolism; 1,4-dihydroxy-2-naphthoate biosynthesis; 1,4-dihydroxy-2-naphthoate from chorismate: step 2/7. It participates in quinol/quinone metabolism; menaquinone biosynthesis. Functionally, catalyzes the thiamine diphosphate-dependent decarboxylation of 2-oxoglutarate and the subsequent addition of the resulting succinic semialdehyde-thiamine pyrophosphate anion to isochorismate to yield 2-succinyl-5-enolpyruvyl-6-hydroxy-3-cyclohexene-1-carboxylate (SEPHCHC). The chain is 2-succinyl-5-enolpyruvyl-6-hydroxy-3-cyclohexene-1-carboxylate synthase from Chlorobaculum parvum (strain DSM 263 / NCIMB 8327) (Chlorobium vibrioforme subsp. thiosulfatophilum).